The sequence spans 269 residues: Tryptophan synthase alpha chain (269 aa).

Active-site proton acceptor residues include E49 and D60.

Belongs to the TrpA family. As to quaternary structure, tetramer of two alpha and two beta chains.

It carries out the reaction (1S,2R)-1-C-(indol-3-yl)glycerol 3-phosphate + L-serine = D-glyceraldehyde 3-phosphate + L-tryptophan + H2O. It participates in amino-acid biosynthesis; L-tryptophan biosynthesis; L-tryptophan from chorismate: step 5/5. The alpha subunit is responsible for the aldol cleavage of indoleglycerol phosphate to indole and glyceraldehyde 3-phosphate. In Buchnera aphidicola subsp. Schlechtendalia chinensis, this protein is Tryptophan synthase alpha chain.